A 378-amino-acid polypeptide reads, in one-letter code: Heat-inducible transcription repressor HrcA (378 aa).

It belongs to the HrcA family.

In terms of biological role, negative regulator of class I heat shock genes (grpE-dnaK-dnaJ and groELS operons). Prevents heat-shock induction of these operons. This is Heat-inducible transcription repressor HrcA from Synechocystis sp. (strain ATCC 27184 / PCC 6803 / Kazusa).